Here is a 108-residue protein sequence, read N- to C-terminus: uncharacterized protein (108 aa).

Residues 10-32 (LQAPYILCTSFITLKIHNFFFFF) traverse the membrane as a helical segment.

It localises to the membrane. This is an uncharacterized protein from Saccharomyces cerevisiae (strain ATCC 204508 / S288c) (Baker's yeast).